We begin with the raw amino-acid sequence, 99 residues long: Translation initiation factor 1A (99 aa).

One can recognise an S1-like domain in the interval R11–T84.

This sequence belongs to the eIF-1A family.

In terms of biological role, seems to be required for maximal rate of protein biosynthesis. Enhances ribosome dissociation into subunits and stabilizes the binding of the initiator Met-tRNA(I) to 40 S ribosomal subunits. The protein is Translation initiation factor 1A (eIF1A) of Methanothermobacter thermautotrophicus (strain ATCC 29096 / DSM 1053 / JCM 10044 / NBRC 100330 / Delta H) (Methanobacterium thermoautotrophicum).